Consider the following 466-residue polypeptide: Glucose-6-phosphate 1-dehydrogenase 1 (466 aa).

Residues serine 48, 88–89, and lysine 141 contribute to the NADP(+) site; that span reads DV. Residues histidine 171, lysine 175, glutamate 209, and aspartate 228 each contribute to the substrate site. Catalysis depends on histidine 233, which acts as the Proton acceptor. Residues lysine 319 and lysine 324 each contribute to the substrate site.

It belongs to the glucose-6-phosphate dehydrogenase family.

The catalysed reaction is D-glucose 6-phosphate + NADP(+) = 6-phospho-D-glucono-1,5-lactone + NADPH + H(+). The protein operates within carbohydrate degradation; pentose phosphate pathway; D-ribulose 5-phosphate from D-glucose 6-phosphate (oxidative stage): step 1/3. In terms of biological role, catalyzes the oxidation of glucose 6-phosphate to 6-phosphogluconolactone. The polypeptide is Glucose-6-phosphate 1-dehydrogenase 1 (Mycobacterium tuberculosis (strain ATCC 25618 / H37Rv)).